Consider the following 49-residue polypeptide: Defensin Tk-AMP-D2 (49 aa).

Disulfide bonds link cysteine 3-cysteine 49, cysteine 14-cysteine 34, cysteine 20-cysteine 43, and cysteine 24-cysteine 45.

Plant defense peptide. The polypeptide is Defensin Tk-AMP-D2 (Triticum kiharae (Wheat)).